Consider the following 152-residue polypeptide: Snaclec agkisacutacin subunit A (152 aa).

The N-terminal stretch at 1–23 (MGRFIFVSFGLLVVFLSLSGTAA) is a signal peptide. In terms of domain architecture, C-type lectin spans 24 to 152 (DCSSGWSSYE…EQQDPFVCEA (129 aa)). 3 cysteine pairs are disulfide-bonded: Cys25–Cys36, Cys53–Cys150, and Cys125–Cys142. Ca(2+) contacts are provided by Ser64, Glu66, and Glu70. Position 151 (Glu151) interacts with Ca(2+).

This sequence belongs to the snaclec family. In terms of assembly, heterodimer with subunit B of AaACP or agkisacutacin; disulfide-linked. As to expression, expressed by the venom gland.

Its subcellular location is the secreted. Anticoagulant protein which binds to the gamma-carboxyglutamic acid-domain regions of factors IX (F9) and factor X (F10) in the presence of calcium with a 1 to 1 stoichiometry. Also inhibits platelet aggregation by binding to platelet glycoprotein Ibalpha (GP1BA) and functioning as a blocker of von Willebrand factor (VWF). Is devoid of hemorrhagic and lethal activities. Possesses antithrombotic and thrombolytic activities. Also hydrolyzes the Aalpha-chain of fibrinogen (FGA). Does not affect the Bbeta-chain (FGB) and the gamma chain (FGG). The chain is Snaclec agkisacutacin subunit A from Deinagkistrodon acutus (Hundred-pace snake).